The sequence spans 87 residues: Lipid-anchored plasma membrane protein uvi15 (87 aa).

Positions 1-64 are disordered; it reads MSAQQFYGDK…MYVQQPQASD (64 aa). Positions 18–41 are enriched in low complexity; that stretch reads QQAYGGPNYYPPQQNYPQQGYAPP.

This sequence belongs to the CYSTM1 family. In terms of processing, palmitoylated.

It localises to the cell membrane. Its subcellular location is the cell tip. Its function is as follows. Required for the maintenance of viability of cells in stationary phase and in starvation conditions. This is Lipid-anchored plasma membrane protein uvi15 (uvi15) from Schizosaccharomyces pombe (strain 972 / ATCC 24843) (Fission yeast).